A 162-amino-acid polypeptide reads, in one-letter code: NADPH-dependent 7-cyano-7-deazaguanine reductase (162 aa).

Cys-53 serves as the catalytic Thioimide intermediate. The active-site Proton donor is the Asp-60. Substrate contacts are provided by residues 75-77 (VES) and 94-95 (HE).

This sequence belongs to the GTP cyclohydrolase I family. QueF type 1 subfamily.

The protein resides in the cytoplasm. It catalyses the reaction 7-aminomethyl-7-carbaguanine + 2 NADP(+) = 7-cyano-7-deazaguanine + 2 NADPH + 3 H(+). It participates in tRNA modification; tRNA-queuosine biosynthesis. Functionally, catalyzes the NADPH-dependent reduction of 7-cyano-7-deazaguanine (preQ0) to 7-aminomethyl-7-deazaguanine (preQ1). This Exiguobacterium sp. (strain ATCC BAA-1283 / AT1b) protein is NADPH-dependent 7-cyano-7-deazaguanine reductase.